The following is a 309-amino-acid chain: Ribose-phosphate pyrophosphokinase (309 aa).

ATP is bound by residues 42–44 (DEE) and 102–103 (RQ). H136 and D175 together coordinate Mg(2+). K199 is an active-site residue. Residues R201, D226, and 230–234 (STGGT) contribute to the D-ribose 5-phosphate site.

It belongs to the ribose-phosphate pyrophosphokinase family. Class III (archaeal) subfamily. Requires Mg(2+) as cofactor.

It localises to the cytoplasm. The enzyme catalyses D-ribose 5-phosphate + ATP = 5-phospho-alpha-D-ribose 1-diphosphate + AMP + H(+). It participates in metabolic intermediate biosynthesis; 5-phospho-alpha-D-ribose 1-diphosphate biosynthesis; 5-phospho-alpha-D-ribose 1-diphosphate from D-ribose 5-phosphate (route I): step 1/1. Functionally, involved in the biosynthesis of the central metabolite phospho-alpha-D-ribosyl-1-pyrophosphate (PRPP) via the transfer of pyrophosphoryl group from ATP to 1-hydroxyl of ribose-5-phosphate (Rib-5-P). The sequence is that of Ribose-phosphate pyrophosphokinase from Aeropyrum pernix (strain ATCC 700893 / DSM 11879 / JCM 9820 / NBRC 100138 / K1).